We begin with the raw amino-acid sequence, 154 residues long: Small ribosomal subunit protein uS7c (154 aa).

The protein belongs to the universal ribosomal protein uS7 family. As to quaternary structure, part of the 30S ribosomal subunit.

The protein localises to the plastid. It localises to the chloroplast. Functionally, one of the primary rRNA binding proteins, it binds directly to 16S rRNA where it nucleates assembly of the head domain of the 30S subunit. This Pleurastrum terricola (Filamentous green alga) protein is Small ribosomal subunit protein uS7c (rps7).